The following is a 510-amino-acid chain: Polyamine aminopropyltransferase 2 (510 aa).

6 helical membrane passes run 6-26, 38-58, 74-94, 102-122, 140-160, and 165-185; these read ALLV…ELIA, ILQF…GSWV, LELL…LLFA, LVLY…IPLV, VLTF…LVLA, and LVRT…WTLW. In terms of domain architecture, PABS spans 205–449; it reads AGMVGAALLA…GEWGFILAAP (245 aa). A spermidine synthase region spans residues 207 to 456; the sequence is MVGAALLAGF…AAPGRADFRP (250 aa). Residue Gln244 coordinates S-methyl-5'-thioadenosine. Spermidine contacts are provided by His274 and Asp298. S-methyl-5'-thioadenosine-binding positions include Asp318 and 352–353; that span reads DA. The active-site Proton acceptor is the Asp370.

This sequence belongs to the spermidine/spermine synthase family. As to quaternary structure, homodimer or homotetramer.

It localises to the cell membrane. The enzyme catalyses S-adenosyl 3-(methylsulfanyl)propylamine + putrescine = S-methyl-5'-thioadenosine + spermidine + H(+). It functions in the pathway amine and polyamine biosynthesis; spermidine biosynthesis; spermidine from putrescine: step 1/1. Catalyzes the irreversible transfer of a propylamine group from the amino donor S-adenosylmethioninamine (decarboxy-AdoMet) to putrescine (1,4-diaminobutane) to yield spermidine. This is Polyamine aminopropyltransferase 2 from Ralstonia nicotianae (strain ATCC BAA-1114 / GMI1000) (Ralstonia solanacearum).